Consider the following 258-residue polypeptide: Type III pantothenate kinase (258 aa).

6–13 contributes to the ATP binding site; that stretch reads DVGNTNIV. Residues Y100 and 107–110 contribute to the substrate site; that span reads GADR. D109 acts as the Proton acceptor in catalysis. D129 serves as a coordination point for K(+). ATP is bound at residue T132. T184 lines the substrate pocket.

This sequence belongs to the type III pantothenate kinase family. Homodimer. The cofactor is NH4(+). It depends on K(+) as a cofactor.

It localises to the cytoplasm. It catalyses the reaction (R)-pantothenate + ATP = (R)-4'-phosphopantothenate + ADP + H(+). It participates in cofactor biosynthesis; coenzyme A biosynthesis; CoA from (R)-pantothenate: step 1/5. In terms of biological role, catalyzes the phosphorylation of pantothenate (Pan), the first step in CoA biosynthesis. The chain is Type III pantothenate kinase from Clostridium botulinum (strain Loch Maree / Type A3).